Reading from the N-terminus, the 71-residue chain is MQKLIILLLVAAVLMSTQALFQEKRLKEKINFLSKEKADAEKQQKRYCSDQWKSCSYPHECCRWSCNRYCA.

An N-terminal signal peptide occupies residues 1-19 (MQKLIILLLVAAVLMSTQA). A propeptide spanning residues 20–46 (LFQEKRLKEKINFLSKEKADAEKQQKR) is cleaved from the precursor. 3 disulfides stabilise this stretch: Cys-48–Cys-62, Cys-55–Cys-66, and Cys-61–Cys-70.

The protein belongs to the conotoxin O2 superfamily. Expressed by the venom duct.

Its subcellular location is the secreted. This is Conotoxin PnMEKL-032 from Conus pennaceus (Feathered cone).